Consider the following 154-residue polypeptide: uncharacterized protein (154 aa).

This is an uncharacterized protein from Methanocaldococcus jannaschii (strain ATCC 43067 / DSM 2661 / JAL-1 / JCM 10045 / NBRC 100440) (Methanococcus jannaschii).